The primary structure comprises 609 residues: 2',5'-phosphodiesterase 12 (609 aa).

Residues 1–42 (MWRLPGARAALRVIRTAVEKLSRAEAGSQTAAGAMERAVVRC) constitute a mitochondrion transit peptide. The span at 89-99 (AAAAKKSRKSR) shows a compositional bias: basic residues. Disordered regions lie at residues 89–111 (AAAA…CSGP) and 206–230 (AEPE…ETDV). Low complexity-rich tracts occupy residues 100 to 111 (PNASGGAACSGP) and 213 to 224 (PSSLSPSSPSSS). At Ser-217 the chain carries Phosphoserine. Mg(2+) is bound by residues Glu-351, Asp-496, and Asn-498. The Proton donor/acceptor role is filled by Asp-496.

It belongs to the CCR4/nocturin family. Mg(2+) serves as cofactor. As to expression, ubiquitous.

The protein localises to the mitochondrion matrix. The catalysed reaction is Exonucleolytic cleavage of poly(A) to 5'-AMP.. Its function is as follows. Enzyme that cleaves 2',5'-phosphodiester bond linking adenosines of the 5'-triphosphorylated oligoadenylates, triphosphorylated oligoadenylates referred as 2-5A modulates the 2-5A system. Degrades triphosphorylated 2-5A to produce AMP and ATP. Also cleaves 3',5'-phosphodiester bond of oligoadenylates. Plays a role as a negative regulator of the 2-5A system that is one of the major pathways for antiviral and antitumor functions induced by interferons (IFNs). Suppression of this enzyme increases cellular 2-5A levels and decreases viral replication in cultured small-airway epithelial cells and Hela cells. The chain is 2',5'-phosphodiesterase 12 (PDE12) from Homo sapiens (Human).